The primary structure comprises 617 residues: MKQSKIPIPTLREMPSDAQVISHALMLRAGYVRQVSAGVYSYLPLANRVIEKAKNIMRQEFEKIGAVEMLAPALLSAELWRESGRYETYGEDLYKLKNREKSDFILGPTHEETFTAIVRDSVKSYKQLPLNLYQIQPKYRDEKRPRNGLLRTREFIMKDAYSFHANYDSLDSVYDEYKAAYERIFTRSGLDFKAIIGDGGAMGGKDSQEFMAITSARTDLDRWVVLDKSVASFDEIPAEVQEEIKAELLKWIVSGEDTIAYSSESSYAANLEMATNEYKPSNRVVAEEEVTRVATPDVKSIDEVAAFLNVPEEQTIKTLFYIADGELVAALLVGNDQLNEVKLKNHLGADFFDVASEEEVANVVQAGFGSLGPVGLPENIKIIADRKVQDVRNAVVGANEDGYHLTGVNPGRDFTSEYVDIREVREGEISPDGQGVLNFARGIEIGHIFKLGTRYSASMGADVLDENGRAVPIIMGCYGIGVSRLLSAVMEQHARLFVNKTPKGEYRYAWGINFPKELAPFDVHLITVNVKDEEAQALTEKLEASLMGAGYEVLTDDRNERVGVKFSDSDLIGLPIRITVGKKAADGIVEVKIKATGDTIEVHADNVLETLEILSKK.

Belongs to the class-II aminoacyl-tRNA synthetase family. ProS type 1 subfamily. As to quaternary structure, homodimer.

The protein localises to the cytoplasm. It carries out the reaction tRNA(Pro) + L-proline + ATP = L-prolyl-tRNA(Pro) + AMP + diphosphate. Its function is as follows. Catalyzes the attachment of proline to tRNA(Pro) in a two-step reaction: proline is first activated by ATP to form Pro-AMP and then transferred to the acceptor end of tRNA(Pro). As ProRS can inadvertently accommodate and process non-cognate amino acids such as alanine and cysteine, to avoid such errors it has two additional distinct editing activities against alanine. One activity is designated as 'pretransfer' editing and involves the tRNA(Pro)-independent hydrolysis of activated Ala-AMP. The other activity is designated 'posttransfer' editing and involves deacylation of mischarged Ala-tRNA(Pro). The misacylated Cys-tRNA(Pro) is not edited by ProRS. The protein is Proline--tRNA ligase of Streptococcus pneumoniae (strain P1031).